The following is a 179-amino-acid chain: Large ribosomal subunit protein uL6 (179 aa).

Belongs to the universal ribosomal protein uL6 family. As to quaternary structure, part of the 50S ribosomal subunit.

In terms of biological role, this protein binds to the 23S rRNA, and is important in its secondary structure. It is located near the subunit interface in the base of the L7/L12 stalk, and near the tRNA binding site of the peptidyltransferase center. The polypeptide is Large ribosomal subunit protein uL6 (Crocosphaera subtropica (strain ATCC 51142 / BH68) (Cyanothece sp. (strain ATCC 51142))).